A 283-amino-acid chain; its full sequence is Thymidylate synthase (283 aa).

Residue R22 coordinates dUMP. C160 acts as the Nucleophile in catalysis. DUMP contacts are provided by residues R180–D183, N191, and H221–Y223. D183 contacts (6R)-5,10-methylene-5,6,7,8-tetrahydrofolate. S282 provides a ligand contact to (6R)-5,10-methylene-5,6,7,8-tetrahydrofolate.

It belongs to the thymidylate synthase family. Bacterial-type ThyA subfamily. In terms of assembly, homodimer.

The protein localises to the cytoplasm. It carries out the reaction dUMP + (6R)-5,10-methylene-5,6,7,8-tetrahydrofolate = 7,8-dihydrofolate + dTMP. It functions in the pathway pyrimidine metabolism; dTTP biosynthesis. Catalyzes the reductive methylation of 2'-deoxyuridine-5'-monophosphate (dUMP) to 2'-deoxythymidine-5'-monophosphate (dTMP) while utilizing 5,10-methylenetetrahydrofolate (mTHF) as the methyl donor and reductant in the reaction, yielding dihydrofolate (DHF) as a by-product. This enzymatic reaction provides an intracellular de novo source of dTMP, an essential precursor for DNA biosynthesis. This Haemophilus influenzae (strain ATCC 51907 / DSM 11121 / KW20 / Rd) protein is Thymidylate synthase.